The chain runs to 141 residues: Putative ankyrin repeat protein FPV223 (141 aa).

ANK repeat units follow at residues 21-50 (SGRTSLHYAVLFNHKRALSFLLARGADVFK), 54-83 (CMCTPLYYAMLSDQRDMVTMLLHSKKYIVK), 85-114 (RNKLDLHNAIETGNIKVIKTLLDNGVNENS), and 118-140 (DGLTPLHYAVKYGNISIVKMFVI).

This chain is Putative ankyrin repeat protein FPV223, found in Vertebrata (FPV).